The primary structure comprises 491 residues: Regulatory protein NPR5 (491 aa).

Positions 26–116 (SDVTFSVEGR…LYSGQVSIVP (91 aa)) constitute a BTB domain. The C2HC NPR-type zinc finger occupies 122–136 (RPNCGERGCWHTHCS). The Zn(2+) site is built by Cys-125, Cys-130, His-132, and Cys-135. ANK repeat units follow at residues 254-283 (QKIRRMRRALDSSDVELVKLMVMGEGLNLD), 284-313 (ESLALHYAVESCSREVVKALLELGAADVNY), 318-347 (AGKTPLHIAAEMVSPDMVAVLLDHHADPNV), and 351-385 (GGITPLDILRTLTSDFLFKGAVPGLTHIEPNKLRL). The interval 400 to 491 (EEGNNSNNQN…MYHHHHQHHF (92 aa)) is disordered. The span at 403–413 (NNSNNQNNDNN) shows a compositional bias: low complexity. The span at 457–470 (DQGDDHNSQREGMS) shows a compositional bias: basic and acidic residues.

The protein belongs to the plant 'ANKYRIN-BTB/POZ' family. 'NOOT-BOP-COCH-like' (NBCL) subfamily. As to quaternary structure, homodimer or heterodimer with BOP1. Interacts with PAN. Highly expressed in young floral meristem. Predominantly expressed in the boundary between floral meristem (FM) and sepal primordia.

Its subcellular location is the cytoplasm. It localises to the nucleus. Its pathway is protein modification; protein ubiquitination. May act as a substrate-specific adapter of an E3 ubiquitin-protein ligase complex (CUL3-RBX1-BTB) which mediates the ubiquitination and subsequent proteasomal degradation of target proteins. Acts redundantly with BOP2. BOP1/2 promote leaf and floral meristem fate and determinacy in a pathway targeting AP1 and AGL24. BOP1/2 act as transcriptional co-regulators through direct interaction with TGA factors, including PAN, a direct regulator of AP1. Controls lateral organ fate through positive regulation of adaxial-abaxial polarity genes ATHB-14/PHB, YAB1/FIL and YAB3, and through positive regulation of LOB domain-containing genes LOB, LBD6/AS2 and LBD36. Promotes and maintains a developmentally determinate state in leaf cells through the negative regulation of JAG, JGL and class I KNOX genes. Is also involved in nectary development, formation of normal abscission zones (AZs) and suppression of bract formation, probably by regulating the cell wall disorganization. The chain is Regulatory protein NPR5 from Arabidopsis thaliana (Mouse-ear cress).